Here is a 338-residue protein sequence, read N- to C-terminus: MATFDDGDFPAQTHSPSEHEDFGGYDNFSEAQQPPTQHQSGGFSSFNGDPASPNGYGFGASSPNHDFSSPFESSVNDANGNGGGSGGDAIFASDGPILPDPNEMREEGFQRREWRRLNTIHLEEKEKKEKEMRNQIITEAEDFKKAFYEKRDKTIETNKTDNREKEKLYWANQEKFHKEVDKHYWKAIAELIPREVPNIEKKRGKKDPDKKPSVNVIQGPKPGKPTDLGRMRQIFLKLKTNPPPHMMPPPPPAKDAKDGKDAKDGKDAKTGKDGKDAKGGKDAKDLKDGKPADPKVTEEKRPSPAKDASVETAKPDAAASGEGEKPVAVTEAEGTKAE.

Residues 1-111 (MATFDDGDFP…NEMREEGFQR (111 aa)) are disordered. Polar residues-rich tracts occupy residues 29–47 (SEAQ…SSFN) and 61–73 (SSPN…PFES). The span at 102-111 (NEMREEGFQR) shows a compositional bias: basic and acidic residues. The involved in binding clathrin heavy chain stretch occupies residues 102–163 (NEMREEGFQR…TIETNKTDNR (62 aa)). Residues 122-142 (LEEKEKKEKEMRNQIITEAED) are a coiled coil. Residues 192-338 (IPREVPNIEK…VTEAEGTKAE (147 aa)) are disordered. Over residues 197–212 (PNIEKKRGKKDPDKKP) the composition is skewed to basic and acidic residues. A compositionally biased stretch (pro residues) spans 241 to 253 (NPPPHMMPPPPPA). Over residues 254-304 (KDAKDGKDAKDGKDAKTGKDGKDAKGGKDAKDLKDGKPADPKVTEEKRPSP) the composition is skewed to basic and acidic residues.

The protein belongs to the clathrin light chain family. As to quaternary structure, clathrin coats are formed from molecules containing 3 heavy chains and 3 light chains.

The protein resides in the cytoplasmic vesicle membrane. It is found in the membrane. It localises to the coated pit. In terms of biological role, clathrin is the major protein of the polyhedral coat of coated pits and vesicles. This Arabidopsis thaliana (Mouse-ear cress) protein is Clathrin light chain 1.